Reading from the N-terminus, the 444-residue chain is Argininosuccinate synthase (444 aa).

ATP is bound by residues 18-26 (AFSGGLDTS) and Ala-44. Tyr-100 provides a ligand contact to L-citrulline. Positions 130 and 132 each coordinate ATP. 3 residues coordinate L-aspartate: Thr-132, Asn-136, and Asp-137. An L-citrulline-binding site is contributed by Asn-136. Residue Asp-137 participates in ATP binding. Positions 140 and 193 each coordinate L-citrulline. Asp-195 lines the ATP pocket. L-citrulline-binding residues include Thr-202, Glu-204, and Glu-281.

This sequence belongs to the argininosuccinate synthase family. Type 2 subfamily. Homotetramer.

It localises to the cytoplasm. The catalysed reaction is L-citrulline + L-aspartate + ATP = 2-(N(omega)-L-arginino)succinate + AMP + diphosphate + H(+). It participates in amino-acid biosynthesis; L-arginine biosynthesis; L-arginine from L-ornithine and carbamoyl phosphate: step 2/3. The protein is Argininosuccinate synthase of Haemophilus influenzae (strain PittEE).